Reading from the N-terminus, the 655-residue chain is Epithelial sodium channel subunit alpha (655 aa).

The Cytoplasmic portion of the chain corresponds to 1 to 55 (MTDKEEEAEGGKKKEPMIGFYDSYQELFEFFCNNTTIHGTIRMVCSKHNNMKTVS). A helical transmembrane segment spans residues 56-76 (WTILFITTFGVMYWQFGLLLG). Residues 77–531 (QYYSYPVSIT…SQWSLWFGSS (455 aa)) lie on the Extracellular side of the membrane. Intrachain disulfides connect Cys-102-Cys-275, Cys-199-Cys-206, Cys-252-Cys-259, Cys-364-Cys-448, Cys-385-Cys-425, Cys-385-Cys-444, Cys-389-Cys-440, Cys-398-Cys-425, Cys-398-Cys-448, and Cys-400-Cys-414. A helical membrane pass occupies residues 532–552 (VLSVVEMGELVFDLIAVGVIV). At 553-655 (LRRRRREKCQ…QEASEGPTVL (103 aa)) the chain is on the cytoplasmic side. Residues 561–587 (CQASSDGEGTSDSTAGTHRGQENASRS) are disordered. Residues 562–586 (QASSDGEGTSDSTAGTHRGQENASR) are compositionally biased toward polar residues.

This sequence belongs to the amiloride-sensitive sodium channel (TC 1.A.6) family. SCNN1A subfamily. In terms of assembly, heterotrimer; containing an alpha/SCNN1A, a beta/SCNN1B and a gamma/SCNN1G subunit. As to expression, strongly expressed in gill, kidney and rectum (at protein level). More weakly expressed in muscle, brain, heart, liver and intestine.

It is found in the apical cell membrane. The protein localises to the cell projection. The protein resides in the cilium. It localises to the cytoplasmic granule. Its subcellular location is the cytoplasm. It is found in the cytoplasmic vesicle. The protein localises to the secretory vesicle. The protein resides in the acrosome. It localises to the flagellum. The enzyme catalyses Na(+)(in) = Na(+)(out). Originally identified and characterized by its inhibition by the diuretic drug amiloride. In terms of biological role, this is one of the three pore-forming subunits of the heterotrimeric epithelial sodium channel (ENaC), a critical regulator of sodium balance and fluid homeostasis. ENaC operates in epithelial tissues, where it mediates the electrodiffusion of sodium ions from extracellular fluid through the apical membrane of cells, with water following osmotically. This chain is Epithelial sodium channel subunit alpha (scnn1a), found in Neoceratodus forsteri (Australian lungfish).